Reading from the N-terminus, the 333-residue chain is Serine/threonine-protein phosphatase PP1-beta (333 aa).

D63, H65, D91, and N123 together coordinate Mn(2+). The Proton donor role is filled by H124. Mn(2+)-binding residues include H172 and H247. The interval 306 to 333 (GAGGVGSNRPVTPPRNAPAAQPKKGAKK) is disordered. Over residues 322–333 (APAAQPKKGAKK) the composition is skewed to low complexity.

Belongs to the PPP phosphatase family. PP-1 subfamily. Interacts with lab-1; the interaction is direct. Interacts with knl-1; the interaction is direct. Mn(2+) serves as cofactor. In terms of tissue distribution, expressed in gonads, nervous system, intestine and muscles.

It is found in the cytoplasm. The protein localises to the nucleus. The enzyme catalyses O-phospho-L-seryl-[protein] + H2O = L-seryl-[protein] + phosphate. The catalysed reaction is O-phospho-L-threonyl-[protein] + H2O = L-threonyl-[protein] + phosphate. With respect to regulation, inhibited by okadaic acid. In terms of biological role, serine/threonine-protein phosphatase essential for chromosomal dynamics during meiosis and mitosis. During meiosis, promotes chromosomal cohesion and germline immortality via a small RNA-mediated genome silencing pathway. Antagonizes the function of air-2 kinase during meiosis I and mitosis to promote chromatid cohesion and spindle attachment. Dephosphorylates histone H3 at 'Ser-10'. Dephosphorylates histone H3 at 'Thr-3'. Also involved in the activation of chloride channel clh-3 during cell swelling and meiotic maturation. Promotes small RNA-mediated genome silencing over multiple generations. Essential for embryogenesis. This Caenorhabditis elegans protein is Serine/threonine-protein phosphatase PP1-beta.